We begin with the raw amino-acid sequence, 170 residues long: Xanthine-guanine phosphoribosyltransferase (170 aa).

5-phospho-alpha-D-ribose 1-diphosphate is bound by residues 41–42 (RG) and 98–106 (DDLTDTGKT). Mg(2+) is bound at residue D99. A guanine-binding site is contributed by D102. Residue D102 coordinates xanthine. 102–106 (DTGKT) is a GMP binding site.

The protein belongs to the purine/pyrimidine phosphoribosyltransferase family. XGPT subfamily. In terms of assembly, homotetramer. Requires Mg(2+) as cofactor.

The protein resides in the cell inner membrane. It carries out the reaction GMP + diphosphate = guanine + 5-phospho-alpha-D-ribose 1-diphosphate. The enzyme catalyses XMP + diphosphate = xanthine + 5-phospho-alpha-D-ribose 1-diphosphate. The catalysed reaction is IMP + diphosphate = hypoxanthine + 5-phospho-alpha-D-ribose 1-diphosphate. It participates in purine metabolism; GMP biosynthesis via salvage pathway; GMP from guanine: step 1/1. Its pathway is purine metabolism; XMP biosynthesis via salvage pathway; XMP from xanthine: step 1/1. Purine salvage pathway enzyme that catalyzes the transfer of the ribosyl-5-phosphate group from 5-phospho-alpha-D-ribose 1-diphosphate (PRPP) to the N9 position of the 6-oxopurines guanine and xanthine to form the corresponding ribonucleotides GMP (guanosine 5'-monophosphate) and XMP (xanthosine 5'-monophosphate), with the release of PPi. To a lesser extent, also acts on hypoxanthine. This Brucella abortus (strain 2308) protein is Xanthine-guanine phosphoribosyltransferase.